Reading from the N-terminus, the 294-residue chain is MTPSRRLLLVHAHPDDETINNGATMARYVAEGAQVTLLTCTLGEEGEVLVPELELLAAEHADQLGGYRIGELRAAMEALGVADWRFLGGPGRYRDSGMMGTPANDEPRAFWNADLDEAVAHAVAVVREVRPQVVVTYDENGGYGHPDHIQAHRVAMRAVDAAADPAYRPDLGGAWEVAKVYWCCVPRSVLRQGIEALAALGEESPFASLDDVDDLPFAVPDELVAAAVDGRAHARRKDAAMRAHATQITVDGPFFALSNNLGQEVLGTEYYRLVRGERGTADGWEDDLFAGLPG.

Zn(2+) contacts are provided by His-13, Asp-16, and His-148.

It belongs to the MshB deacetylase family. Requires Zn(2+) as cofactor.

The catalysed reaction is 1D-myo-inositol 2-acetamido-2-deoxy-alpha-D-glucopyranoside + H2O = 1D-myo-inositol 2-amino-2-deoxy-alpha-D-glucopyranoside + acetate. Functionally, catalyzes the deacetylation of 1D-myo-inositol 2-acetamido-2-deoxy-alpha-D-glucopyranoside (GlcNAc-Ins) in the mycothiol biosynthesis pathway. This chain is 1D-myo-inositol 2-acetamido-2-deoxy-alpha-D-glucopyranoside deacetylase, found in Geodermatophilus obscurus (strain ATCC 25078 / DSM 43160 / JCM 3152 / CCUG 61914 / KCC A-0152 / KCTC 9177 / NBRC 13315 / NRRL B-3577 / G-20).